We begin with the raw amino-acid sequence, 128 residues long: Glycine cleavage system H protein (128 aa).

A Lipoyl-binding domain is found at 22 to 104 (TALVGVTDYA…YASGWLVKIK (83 aa)). Lys-63 is modified (N6-lipoyllysine).

This sequence belongs to the GcvH family. As to quaternary structure, the glycine cleavage system is composed of four proteins: P, T, L and H. (R)-lipoate is required as a cofactor.

In terms of biological role, the glycine cleavage system catalyzes the degradation of glycine. The H protein shuttles the methylamine group of glycine from the P protein to the T protein. The polypeptide is Glycine cleavage system H protein (Halothermothrix orenii (strain H 168 / OCM 544 / DSM 9562)).